Reading from the N-terminus, the 377-residue chain is Cytochrome b (377 aa).

The next 4 membrane-spanning stretches (helical) occupy residues 34–54, 78–100, 113–133, and 179–199; these read FGFLLGMCLSIQIFTGLFLSM, WLLRVLHANGGSMFFICLYIHIA, TWMTGVVLLILVMATAFLGYV, and FFTLHFILPFVVLAMVAIHLL. Heme b contacts are provided by His84 and His98. Heme b-binding residues include His183 and His197. A ubiquinone is bound at residue His202. 4 consecutive transmembrane segments (helical) span residues 225 to 245, 288 to 308, 323 to 343, and 352 to 372; these read FTIKDLFGVVVMVWLLMILVL, KLGGVVALLASVVILIILPLY, MLFWGFISIFILLTWIGAQAI, and QILTSLYFFYFILSPLLSVLW.

Belongs to the cytochrome b family. As to quaternary structure, the main subunits of complex b-c1 are: cytochrome b, cytochrome c1 and the Rieske protein. The cofactor is heme b.

It is found in the mitochondrion inner membrane. Its function is as follows. Component of the ubiquinol-cytochrome c reductase complex (complex III or cytochrome b-c1 complex) that is part of the mitochondrial respiratory chain. The b-c1 complex mediates electron transfer from ubiquinol to cytochrome c. Contributes to the generation of a proton gradient across the mitochondrial membrane that is then used for ATP synthesis. The sequence is that of Cytochrome b (mt:Cyt-b) from Priapulus caudatus (Priapulid worm).